Consider the following 607-residue polypeptide: Phosphatidylinositol 4-kinase LSB6 (607 aa).

The segment covering 73 to 88 (NVPSESPRPDQTSGSN) has biased composition (polar residues). The tract at residues 73–93 (NVPSESPRPDQTSGSNPAVGL) is disordered. The PI3K/PI4K catalytic domain maps to 161–522 (GRELERIQTG…LVRRTRCQVI (362 aa)). Positions 167–173 (IQTGSSG) are G-loop. The tract at residues 318-356 (KSSGEDINHKPETTRNLTDETEPSKQINSSPISTESEEN) is disordered. The span at 319-330 (SSGEDINHKPET) shows a compositional bias: basic and acidic residues. Residues 341–351 (SKQINSSPIST) show a composition bias toward polar residues. The tract at residues 384-392 (RNTDRGLDN) is catalytic loop. The segment at 411-431 (AIDNGLSFPWKHPDEWRLYPY) is activation loop.

This sequence belongs to the PI3/PI4-kinase family. As to quaternary structure, interacts with LAS17. Mg(2+) is required as a cofactor. The cofactor is Mn(2+).

It is found in the cell membrane. Its subcellular location is the vacuole membrane. The enzyme catalyses a 1,2-diacyl-sn-glycero-3-phospho-(1D-myo-inositol) + ATP = a 1,2-diacyl-sn-glycero-3-phospho-(1D-myo-inositol 4-phosphate) + ADP + H(+). In terms of biological role, may play a role in endocytic and/or exocytic pathways. This Saccharomyces cerevisiae (strain ATCC 204508 / S288c) (Baker's yeast) protein is Phosphatidylinositol 4-kinase LSB6 (LSB6).